The chain runs to 130 residues: Flagellar assembly factor FliW (130 aa).

The protein belongs to the FliW family. Interacts with translational regulator CsrA and flagellin(s).

It localises to the cytoplasm. Acts as an anti-CsrA protein, binds CsrA and prevents it from repressing translation of its target genes, one of which is flagellin. Binds to flagellin and participates in the assembly of the flagellum. The sequence is that of Flagellar assembly factor FliW from Borrelia duttonii (strain Ly).